The primary structure comprises 105 residues: Small ribosomal subunit protein uS10 (105 aa).

It belongs to the universal ribosomal protein uS10 family. As to quaternary structure, part of the 30S ribosomal subunit.

Its function is as follows. Involved in the binding of tRNA to the ribosomes. This chain is Small ribosomal subunit protein uS10, found in Gloeothece citriformis (strain PCC 7424) (Cyanothece sp. (strain PCC 7424)).